The primary structure comprises 211 residues: Octanoyltransferase (211 aa).

Positions 28-203 (GSAPETLLLV…HFQSLLKTWL (176 aa)) constitute a BPL/LPL catalytic domain. Residues 66 to 73 (RGGDITYH), 133 to 135 (SIG), and 146 to 148 (GFA) each bind substrate. Catalysis depends on C164, which acts as the Acyl-thioester intermediate.

This sequence belongs to the LipB family.

Its subcellular location is the cytoplasm. The catalysed reaction is octanoyl-[ACP] + L-lysyl-[protein] = N(6)-octanoyl-L-lysyl-[protein] + holo-[ACP] + H(+). Its pathway is protein modification; protein lipoylation via endogenous pathway; protein N(6)-(lipoyl)lysine from octanoyl-[acyl-carrier-protein]: step 1/2. Catalyzes the transfer of endogenously produced octanoic acid from octanoyl-acyl-carrier-protein onto the lipoyl domains of lipoate-dependent enzymes. Lipoyl-ACP can also act as a substrate although octanoyl-ACP is likely to be the physiological substrate. In Syntrophotalea carbinolica (strain DSM 2380 / NBRC 103641 / GraBd1) (Pelobacter carbinolicus), this protein is Octanoyltransferase.